The primary structure comprises 114 residues: Ig kappa chain V-I region S107A (114 aa).

The segment at 1–23 is framework-1; the sequence is DIVMTQSPTFLAVTASKKVTISC. An intrachain disulfide couples C23 to C94. The segment at 24–40 is complementarity-determining-1; sequence TASESLYSSKHKVHYLA. The interval 41–55 is framework-2; the sequence is WYQKKPEQSPKLLIY. Residues 56–62 form a complementarity-determining-2 region; it reads GASNRYI. Positions 63–94 are framework-3; it reads GVPDRFTGSGSGTDFTLTISSVQVEDLTHYYC. The complementarity-determining-3 stretch occupies residues 95–103; it reads AQFYSYPLT. Residues 104-113 form a framework-4 region; sequence FGAGTKLELK.

Anti-phosphocholine antibody. This chain is Ig kappa chain V-I region S107A (Igkv7-33), found in Mus musculus (Mouse).